Consider the following 151-residue polypeptide: Flagellar assembly factor FliW 2 (151 aa).

The protein belongs to the FliW family. In terms of assembly, interacts with translational regulator CsrA and flagellin(s).

Its subcellular location is the cytoplasm. Acts as an anti-CsrA protein, binds CsrA and prevents it from repressing translation of its target genes, one of which is flagellin. Binds to flagellin and participates in the assembly of the flagellum. In Desulfotalea psychrophila (strain LSv54 / DSM 12343), this protein is Flagellar assembly factor FliW 2.